The chain runs to 1208 residues: Urease accessory protein 2 (1208 aa).

2 coiled-coil regions span residues 187 to 362 (RDKI…EKAA) and 400 to 469 (IKAL…MHEQ). An SMC hinge domain is found at 523–633 (DGVFGPLYDL…ICEDLQTAAH (111 aa)). 2 coiled-coil regions span residues 688-771 (HIEV…YEEE) and 817-903 (NRLE…VQTQ). The tract at residues 748–773 (ESSLEEAEGASRDAKAKRASYEEELR) is disordered. Basic and acidic residues predominate over residues 756–773 (GASRDAKAKRASYEEELR).

It belongs to the SMC family. SMC3 subfamily. Component of cohesin complexes.

Its subcellular location is the nucleus. In terms of biological role, central component of cohesin, a complex required for chromosome cohesion during the cell cycle. The cohesin complex may form a large proteinaceous ring within which sister chromatids can be trapped. At anaphase, the complex is cleaved and dissociates from chromatin, allowing sister chromatids to segregate. Cohesion is coupled to DNA replication and is involved in DNA repair. The cohesin complex also plays an important role in spindle pole assembly during mitosis and in chromosomes movement. Is unrelated to urease function in C.neoformans. This is Urease accessory protein 2 from Cryptococcus neoformans var. grubii serotype A (strain H99 / ATCC 208821 / CBS 10515 / FGSC 9487) (Filobasidiella neoformans var. grubii).